A 959-amino-acid polypeptide reads, in one-letter code: AP2-associated protein kinase 1 (959 aa).

Met-1 carries the post-translational modification N-acetylmethionine. Basic and acidic residues predominate over residues 1 to 11 (MKKFFDSRREQ). The segment at 1-27 (MKKFFDSRREQGSSGLGSGSSGGGGSS) is disordered. A Phosphoserine modification is found at Ser-14. The segment covering 14–27 (SGLGSGSSGGGGSS) has biased composition (gly residues). Residues 46–315 (VTVDEVLAEG…QVSYFSFKLL (270 aa)) enclose the Protein kinase domain. Residues 52 to 60 (LAEGGFALV) and Lys-74 contribute to the ATP site. The active-site Proton acceptor is Asp-176. Position 234 is a phosphotyrosine (Tyr-234). Position 235 is a phosphoserine (Ser-235). Residues 340-385 (SEAAVKKTQPKARLTDPIPTTETSIAPRQRPKAGQTQPNPGILPIQ) are disordered. Thr-354 and Thr-389 each carry phosphothreonine. At Arg-391 the chain carries Omega-N-methylarginine. Disordered stretches follow at residues 398 to 514 (PLPQ…AVHP) and 578 to 630 (TAPQ…RAGH). A compositionally biased stretch (polar residues) spans 404-419 (GPSNQPGLLPSVSQPK). The segment covering 420–435 (AQATPSQPLQSSQPKQ) has biased composition (low complexity). Thr-441 is modified (phosphothreonine). Low complexity-rich tracts occupy residues 444 to 481 (QTPA…QPQQ), 494 to 510 (QQQQ…QQFQ), and 578 to 603 (TAPQ…KVQT). Phosphothreonine is present on Thr-604. Residues 609-625 (IQGQKVGSLTPPSSPKT) show a composition bias toward polar residues. At Ser-616 the chain carries Phosphoserine. The residue at position 618 (Thr-618) is a Phosphothreonine. Phosphoserine occurs at positions 621, 622, 635, and 648. Thr-651 bears the Phosphothreonine mark. Disordered stretches follow at residues 662 to 699 (SLNK…FDDD), 727 to 763 (GGSA…GGQA), 837 to 857 (PVAQ…TDSL), and 923 to 943 (ITKN…ESSL). The segment covering 670–694 (TTTPSGSPRTSQQNVSNASEGSTWN) has biased composition (polar residues). Position 729 is a phosphoserine (Ser-729). 2 stretches are compositionally biased toward polar residues: residues 738 to 752 (QPTQ…SFSA) and 842 to 857 (LPSQ…TDSL). Residues 821–958 (DKADVAVESL…SLLLVDQLID (138 aa)) are clathrin-binding domain (CBD). Phosphoserine occurs at positions 844, 935, and 936. Over residues 929-942 (GGHSRNSSGSSESS) the composition is skewed to low complexity.

This sequence belongs to the protein kinase superfamily. Ser/Thr protein kinase family. As to quaternary structure, interacts (via CBD domain) with clathrin. Interacts with AP-2 complex. Interacts with NUMB. Interacts with alpha-adaptin. Interacts with EPS15 isoform 2. Interacts with membrane-bound activated NOTCH1 but not with the inactive full-length form of NOTCH1. Preferentially interacts with monoubiquitinated activated NOTCH1 compared to the non-ubiquitinated form. In terms of processing, autophosphorylated.

The protein resides in the cell membrane. Its subcellular location is the membrane. It is found in the clathrin-coated pit. It localises to the presynapse. It carries out the reaction L-seryl-[protein] + ATP = O-phospho-L-seryl-[protein] + ADP + H(+). The enzyme catalyses L-threonyl-[protein] + ATP = O-phospho-L-threonyl-[protein] + ADP + H(+). With respect to regulation, stimulated by clathrin. Its function is as follows. Regulates clathrin-mediated endocytosis by phosphorylating the AP2M1/mu2 subunit of the adaptor protein complex 2 (AP-2) which ensures high affinity binding of AP-2 to cargo membrane proteins during the initial stages of endocytosis. Preferentially, may phosphorylate substrates on threonine residues. Regulates phosphorylation of other AP-2 subunits as well as AP-2 localization and AP-2-mediated internalization of ligand complexes. Phosphorylates NUMB and regulates its cellular localization, promoting NUMB localization to endosomes. Binds to and stabilizes the activated form of NOTCH1, increases its localization in endosomes and regulates its transcriptional activity. The chain is AP2-associated protein kinase 1 (Aak1) from Mus musculus (Mouse).